Here is a 396-residue protein sequence, read N- to C-terminus: NADH-quinone oxidoreductase subunit D (396 aa).

Belongs to the complex I 49 kDa subunit family. As to quaternary structure, NDH-1 is composed of 14 different subunits. Subunits NuoB, C, D, E, F, and G constitute the peripheral sector of the complex.

It is found in the cell inner membrane. The catalysed reaction is a quinone + NADH + 5 H(+)(in) = a quinol + NAD(+) + 4 H(+)(out). In terms of biological role, NDH-1 shuttles electrons from NADH, via FMN and iron-sulfur (Fe-S) centers, to quinones in the respiratory chain. The immediate electron acceptor for the enzyme in this species is believed to be ubiquinone. Couples the redox reaction to proton translocation (for every two electrons transferred, four hydrogen ions are translocated across the cytoplasmic membrane), and thus conserves the redox energy in a proton gradient. This is NADH-quinone oxidoreductase subunit D from Brucella abortus (strain S19).